A 542-amino-acid chain; its full sequence is CTP synthase (542 aa).

Positions 1–265 are amidoligase domain; that stretch reads MARYVFITGG…DSEILSAFGI (265 aa). CTP is bound at residue serine 13. A UTP-binding site is contributed by serine 13. Position 14 to 19 (14 to 19) interacts with ATP; it reads SLGKGI. Tyrosine 54 is a binding site for L-glutamine. Aspartate 71 contacts ATP. Aspartate 71 and glutamate 139 together coordinate Mg(2+). CTP contacts are provided by residues 146-148, 186-191, and lysine 222; these read DIE and KTKPTQ. UTP-binding positions include 186 to 191 and lysine 222; that span reads KTKPTQ. The region spanning 291-541 is the Glutamine amidotransferase type-1 domain; sequence TIAIVGKYTG…IAATVEQSRL (251 aa). Alanine 353 is a binding site for L-glutamine. Cysteine 380 functions as the Nucleophile; for glutamine hydrolysis in the catalytic mechanism. Residues 381–384, glutamate 404, and arginine 469 contribute to the L-glutamine site; that span reads FGMQ. Active-site residues include histidine 514 and glutamate 516.

This sequence belongs to the CTP synthase family. In terms of assembly, homotetramer.

It carries out the reaction UTP + L-glutamine + ATP + H2O = CTP + L-glutamate + ADP + phosphate + 2 H(+). The catalysed reaction is L-glutamine + H2O = L-glutamate + NH4(+). It catalyses the reaction UTP + NH4(+) + ATP = CTP + ADP + phosphate + 2 H(+). The protein operates within pyrimidine metabolism; CTP biosynthesis via de novo pathway; CTP from UDP: step 2/2. With respect to regulation, allosterically activated by GTP, when glutamine is the substrate; GTP has no effect on the reaction when ammonia is the substrate. The allosteric effector GTP functions by stabilizing the protein conformation that binds the tetrahedral intermediate(s) formed during glutamine hydrolysis. Inhibited by the product CTP, via allosteric rather than competitive inhibition. Functionally, catalyzes the ATP-dependent amination of UTP to CTP with either L-glutamine or ammonia as the source of nitrogen. Regulates intracellular CTP levels through interactions with the four ribonucleotide triphosphates. This Bartonella bacilliformis (strain ATCC 35685 / KC583 / Herrer 020/F12,63) protein is CTP synthase.